A 128-amino-acid polypeptide reads, in one-letter code: Sulfurtransferase TusD (128 aa).

The Cysteine persulfide intermediate role is filled by Cys78.

The protein belongs to the DsrE/TusD family. In terms of assembly, heterohexamer, formed by a dimer of trimers. The hexameric TusBCD complex contains 2 copies each of TusB, TusC and TusD. The TusBCD complex interacts with TusE.

Its subcellular location is the cytoplasm. Functionally, part of a sulfur-relay system required for 2-thiolation of 5-methylaminomethyl-2-thiouridine (mnm(5)s(2)U) at tRNA wobble positions. Accepts sulfur from TusA and transfers it in turn to TusE. This is Sulfurtransferase TusD from Shigella dysenteriae serotype 1 (strain Sd197).